Reading from the N-terminus, the 103-residue chain is Putative double-stranded DNA mimic protein HAPS_1002 (103 aa).

The protein belongs to the putative dsDNA mimic protein family.

May act as a double-stranded DNA (dsDNA) mimic. Probably regulates the activity of a dsDNA-binding protein. This chain is Putative double-stranded DNA mimic protein HAPS_1002, found in Glaesserella parasuis serovar 5 (strain SH0165) (Haemophilus parasuis).